A 124-amino-acid polypeptide reads, in one-letter code: Fluoride-specific ion channel FluC (124 aa).

4 consecutive transmembrane segments (helical) span residues 4-24 (LLLV…ISIF), 35-55 (FGTL…YALG), 60-80 (ISPE…TTFS), and 102-122 (VVLN…LVFS). Na(+)-binding residues include G74 and T77.

Belongs to the fluoride channel Fluc/FEX (TC 1.A.43) family.

It localises to the cell inner membrane. The catalysed reaction is fluoride(in) = fluoride(out). Na(+) is not transported, but it plays an essential structural role and its presence is essential for fluoride channel function. Functionally, fluoride-specific ion channel. Important for reducing fluoride concentration in the cell, thus reducing its toxicity. The polypeptide is Fluoride-specific ion channel FluC (Shewanella oneidensis (strain ATCC 700550 / JCM 31522 / CIP 106686 / LMG 19005 / NCIMB 14063 / MR-1)).